We begin with the raw amino-acid sequence, 472 residues long: MAKRVKILVVGDLMLDHYIWGSCERISPEAPVQVVKINNETYTLGGAGNVVRNLLSLGANVSVASVLGDDEAGKKIKEKLAELNVKDELILTEKGRESSIKSRIMASHQQVVRIDKESVVKINLEDELVLKVKENLANFKAVLLSDYGKGVLSEKVCQEIINECVKLKIPVLIDPKGSDYSKYKNATLLTPNKKEASEATNLKIKDKAELEKAIKQLKEELNLTYSIITISEEGIALYDDKLHIFAAKAKEVFDVTGAGDTVLATLGYMLANGADIKEAIKIANLAAAVVVAKIGSATASFSEIEQLLNSSFGANFEHKLKSIEELEEILSQKGKKKVVFTNGCFDILHAGHVKYLARARELGDLLVVGLNSDASVKRLKGEARPINSQDDRACVLSGLGFVDYVVIFDEDTPLNLITKIKPDVLVKGADYKGKEVVGSDIVKEVRLIDFVEGKSTTGIIKRIKDAKNDDKK.

Residues 1–315 (MAKRVKILVV…QLLNSSFGAN (315 aa)) form a ribokinase region. 192 to 195 (NKKE) contacts ATP. Aspartate 260 is a catalytic residue. The cytidylyltransferase stretch occupies residues 340–472 (FTNGCFDILH…IKDAKNDDKK (133 aa)).

In the N-terminal section; belongs to the carbohydrate kinase PfkB family. The protein in the C-terminal section; belongs to the cytidylyltransferase family. In terms of assembly, homodimer.

The catalysed reaction is D-glycero-beta-D-manno-heptose 7-phosphate + ATP = D-glycero-beta-D-manno-heptose 1,7-bisphosphate + ADP + H(+). The enzyme catalyses D-glycero-beta-D-manno-heptose 1-phosphate + ATP + H(+) = ADP-D-glycero-beta-D-manno-heptose + diphosphate. It functions in the pathway nucleotide-sugar biosynthesis; ADP-L-glycero-beta-D-manno-heptose biosynthesis; ADP-L-glycero-beta-D-manno-heptose from D-glycero-beta-D-manno-heptose 7-phosphate: step 1/4. Its pathway is nucleotide-sugar biosynthesis; ADP-L-glycero-beta-D-manno-heptose biosynthesis; ADP-L-glycero-beta-D-manno-heptose from D-glycero-beta-D-manno-heptose 7-phosphate: step 3/4. In terms of biological role, catalyzes the phosphorylation of D-glycero-D-manno-heptose 7-phosphate at the C-1 position to selectively form D-glycero-beta-D-manno-heptose-1,7-bisphosphate. Its function is as follows. Catalyzes the ADP transfer from ATP to D-glycero-beta-D-manno-heptose 1-phosphate, yielding ADP-D-glycero-beta-D-manno-heptose. The sequence is that of Bifunctional protein HldE from Campylobacter concisus (strain 13826).